The sequence spans 156 residues: Ribonuclease H (156 aa).

An RNase H type-1 domain is found at 2 to 144; the sequence is SQFDVTVFTD…CDVLARAQAS (143 aa). Mg(2+)-binding residues include Asp-11, Glu-49, Asp-71, and Asp-136.

It belongs to the RNase H family. As to quaternary structure, monomer. Mg(2+) serves as cofactor.

It is found in the cytoplasm. The catalysed reaction is Endonucleolytic cleavage to 5'-phosphomonoester.. In terms of biological role, endonuclease that specifically degrades the RNA of RNA-DNA hybrids. The sequence is that of Ribonuclease H from Nitratidesulfovibrio vulgaris (strain ATCC 29579 / DSM 644 / CCUG 34227 / NCIMB 8303 / VKM B-1760 / Hildenborough) (Desulfovibrio vulgaris).